The chain runs to 697 residues: Heat shock protein homolog SSE1 (697 aa).

Residues 664 to 674 are compositionally biased toward low complexity; the sequence is EMAEKLAAQRA. Residues 664-697 are disordered; it reads EMAEKLAAQRAAEQKAQESKAESDKDAEGDIDLD. Residues 675–691 are compositionally biased toward basic and acidic residues; it reads AEQKAQESKAESDKDAE.

The protein belongs to the heat shock protein 70 family.

It is found in the cytoplasm. The chain is Heat shock protein homolog SSE1 (SSE1) from Eremothecium gossypii (strain ATCC 10895 / CBS 109.51 / FGSC 9923 / NRRL Y-1056) (Yeast).